Here is a 40-residue protein sequence, read N- to C-terminus: Muscarinic m1-toxin3 (40 aa).

A disulfide bridge connects residues Cys3 and Cys24.

This sequence belongs to the three-finger toxin family. Short-chain subfamily. Aminergic toxin sub-subfamily. As to quaternary structure, monomer. Contains 4 disulfide bonds. Expressed by the venom gland.

It localises to the secreted. Functionally, binds irreversibly and specifically to M1 (CHRM1) muscarinic acetylcholine receptors, blocking further binding of antagonists and preventing the action of agonists. In Dendroaspis angusticeps (Eastern green mamba), this protein is Muscarinic m1-toxin3.